A 74-amino-acid polypeptide reads, in one-letter code: Arabinogalactan protein 20 (74 aa).

Residues 1 to 26 (MASRNSVAVIALFAFVFAVISPFAGA) form the signal peptide. A Pyrrolidone carboxylic acid modification is found at glutamine 27. A 4-hydroxyproline mark is found at proline 31, proline 33, and proline 35. O-linked (Ara...) hydroxyproline glycosylation is found at proline 31, proline 33, and proline 35. Serine 37 carries GPI-anchor amidated serine lipidation. Residues 38-74 (DGTSIDQGIAYLLMVVALVLTYLIHPLDASSSSYTFF) constitute a propeptide, removed in mature form.

It belongs to the AG-peptide AGP family. In terms of processing, contains 4-hydroxyproline; hydroxylated on Pro-31, Pro-33 and Pro-35. O-glycosylated on hydroxyprolines; noncontiguous hydroxylproline residues are glycosylated with arabinogalactan.

The protein localises to the cell membrane. Proteoglycan that seems to be implicated in diverse developmental roles such as differentiation, cell-cell recognition, embryogenesis and programmed cell death. In Arabidopsis thaliana (Mouse-ear cress), this protein is Arabinogalactan protein 20.